We begin with the raw amino-acid sequence, 264 residues long: 3-methyl-2-oxobutanoate hydroxymethyltransferase (264 aa).

2 residues coordinate Mg(2+): Asp-45 and Asp-84. 3-methyl-2-oxobutanoate-binding positions include 45-46 (DS), Asp-84, and Lys-112. Position 114 (Glu-114) interacts with Mg(2+). Catalysis depends on Glu-181, which acts as the Proton acceptor.

The protein belongs to the PanB family. Homodecamer; pentamer of dimers. It depends on Mg(2+) as a cofactor.

It is found in the cytoplasm. The enzyme catalyses 3-methyl-2-oxobutanoate + (6R)-5,10-methylene-5,6,7,8-tetrahydrofolate + H2O = 2-dehydropantoate + (6S)-5,6,7,8-tetrahydrofolate. It functions in the pathway cofactor biosynthesis; (R)-pantothenate biosynthesis; (R)-pantoate from 3-methyl-2-oxobutanoate: step 1/2. Its function is as follows. Catalyzes the reversible reaction in which hydroxymethyl group from 5,10-methylenetetrahydrofolate is transferred onto alpha-ketoisovalerate to form ketopantoate. The chain is 3-methyl-2-oxobutanoate hydroxymethyltransferase from Edwardsiella ictaluri (strain 93-146).